The primary structure comprises 808 residues: Probable inorganic carbon transporter subunit DabA (808 aa).

Zn(2+) contacts are provided by Cys-334, Asp-336, His-494, and Cys-509.

It belongs to the inorganic carbon transporter (TC 9.A.2) DabA family. As to quaternary structure, forms a complex with DabB. The cofactor is Zn(2+).

It localises to the cell inner membrane. Part of an energy-coupled inorganic carbon pump. This Allorhizobium ampelinum (strain ATCC BAA-846 / DSM 112012 / S4) (Agrobacterium vitis (strain S4)) protein is Probable inorganic carbon transporter subunit DabA.